Here is a 423-residue protein sequence, read N- to C-terminus: E3 ubiquitin-protein ligase makorin-2 (423 aa).

2 consecutive C3H1-type zinc fingers follow at residues 2–29 and 31–58; these read STKQ…HDLN and SKPS…HIKP. The interval 59–90 is disordered; that stretch reads SSRGGGGGAPEDQAGGGGAGGGGAGIGGAGGG. Residues 61-90 show a composition bias toward gly residues; sequence RGGGGGAPEDQAGGGGAGGGGAGIGGAGGG. The C3H1-type 3 zinc-finger motif lies at 162-189; the sequence is QNLPQLCPYAANGHCFYEENCTYLHGDL. The tract at residues 190–219 is makorin-type Cys-His; the sequence is CEVCGLQVLHPHDSEQRRAHEKMCLAAFEA. The RING-type zinc-finger motif lies at 235–289; the sequence is CSICMEVVVQKANPSDRRFGILSSCCHTFCLACIRKWRCTRTFSNTIIKSCPECR. The C3H1-type 4 zinc finger occupies 318–347; that stretch reads GVSKKACKYFDQGRGSCPFGGKCLYLHAFP.

It localises to the cytoplasm. The protein localises to the nucleus. It carries out the reaction S-ubiquitinyl-[E2 ubiquitin-conjugating enzyme]-L-cysteine + [acceptor protein]-L-lysine = [E2 ubiquitin-conjugating enzyme]-L-cysteine + N(6)-ubiquitinyl-[acceptor protein]-L-lysine.. Its pathway is protein modification; protein ubiquitination. In terms of biological role, E3 ubiquitin ligase catalyzing the covalent attachment of ubiquitin moieties onto substrate proteins. Inhibits neurogenesis and axis formation during embryonic development by modulating the phosphatidylinositol 3-kinase (PI3K) pathway. Acts downstream of PI3K and akt1 to up-regulate gsk3b mRNA expression. The sequence is that of E3 ubiquitin-protein ligase makorin-2 (mkrn2) from Seriola quinqueradiata (Five-ray yellowtail).